The chain runs to 552 residues: Hyaluronan synthase 2 (552 aa).

Over 1 to 11 (MHCERFLCVLR) the chain is Cytoplasmic. The chain crosses the membrane as a helical span at residues 12 to 32 (IIGTTLFGVSLLLGITAAYIV). The Extracellular portion of the chain corresponds to 33–45 (GYQFIQTDNYYFS). The chain crosses the membrane as a helical span at residues 46–66 (FGLYGAFLASHLIIQSLFAFL). The Cytoplasmic portion of the chain corresponds to 67–374 (EHRKMKKSLE…NAMWFHKHHL (308 aa)). Threonine 110 is subject to Phosphothreonine. A Glycyl lysine isopeptide (Lys-Gly) (interchain with G-Cter in ubiquitin) cross-link involves residue lysine 190. Serine 221 carries O-linked (GlcNAc) serine glycosylation. Position 328 is a phosphothreonine (threonine 328). Residues 375 to 395 (WMTYEAVITGFFPFFLIATVI) traverse the membrane as a helical segment. Topologically, residues 396–402 (QLFYRGK) are extracellular. The helical transmembrane segment at 403 to 423 (IWNILLFLLTVQLVGLIKSSF) threads the bilayer. The Cytoplasmic segment spans residues 424–429 (ASCLRG). A helical transmembrane segment spans residues 430–450 (NIVMVFMSLYSVLYMSSLLPA). At 451–475 (KMFAIATINKAGWGTSGRKTIVVNF) the chain is on the extracellular side. A helical transmembrane segment spans residues 476-496 (IGLIPVSVWFTILLGGVIFTI). The Cytoplasmic segment spans residues 497–510 (YKESKKPFSESKQT). Residues 511–531 (VLIVGTLIYACYWVVLLTLYV) form a helical membrane-spanning segment. Topologically, residues 532 to 552 (VLINKCGRRKKGQQYDMVLDV) are extracellular.

Belongs to the NodC/HAS family. Homodimer; dimerization promotes enzymatic activity. Forms heterodimer with HAS3. Forms heterodimer with HAS1. It depends on Mg(2+) as a cofactor. In terms of processing, phosphorylation at Thr-328 is essential for hyaluronan synthase activity. Post-translationally, O-GlcNAcylation at Ser-221 increases the stability of HAS2 and plasma membrane localization. Ubiquitination at Lys-190; this ubiquitination is essential for hyaluronan synthase activity and homo- or hetero-oligomerization. Can also be poly-ubiquitinated. Deubiquitinated by USP17L22/USP17 and USP4. USP17L22/USP17 efficiently removes 'Lys-63'- and 'Lys-48'-linked polyubiquitin chains, whereas USP4 preferentially removes monoubiquitination and, partially, both 'Lys-63'- and 'Lys-48'-linked polyubiquitin chain.

It is found in the cell membrane. The protein localises to the endoplasmic reticulum membrane. Its subcellular location is the vesicle. The protein resides in the golgi apparatus membrane. It localises to the lysosome. It catalyses the reaction [hyaluronan](n) + UDP-N-acetyl-alpha-D-glucosamine = N-acetyl-beta-D-glucosaminyl-(1-&gt;4)-[hyaluronan](n) + UDP + H(+). It carries out the reaction N-acetyl-beta-D-glucosaminyl-(1-&gt;4)-[hyaluronan](n) + UDP-alpha-D-glucuronate = [hyaluronan](n+1) + UDP + H(+). The protein operates within glycan biosynthesis; hyaluronan biosynthesis. Catalyzes the addition of GlcNAc or GlcUA monosaccharides to the nascent hyaluronan polymer. Therefore, it is essential to hyaluronan synthesis a major component of most extracellular matrices that has a structural role in tissues architectures and regulates cell adhesion, migration and differentiation. This is one of three isoenzymes responsible for cellular hyaluronan synthesis and it is particularly responsible for the synthesis of high molecular mass hyaluronan. This is Hyaluronan synthase 2 (Has2) from Rattus norvegicus (Rat).